The sequence spans 364 residues: Biotin synthase (364 aa).

The disordered stretch occupies residues 14-36 (DTIPPGTETPYASPSHARTEEAP). Residues 70–308 (RKGPLATTCG…QRDILVCGGR (239 aa)) enclose the Radical SAM core domain. [4Fe-4S] cluster contacts are provided by C88, C92, and C95. 2 residues coordinate [2Fe-2S] cluster: C164 and C233.

It belongs to the radical SAM superfamily. Biotin synthase family. Homodimer. [4Fe-4S] cluster serves as cofactor. Requires [2Fe-2S] cluster as cofactor.

It catalyses the reaction (4R,5S)-dethiobiotin + (sulfur carrier)-SH + 2 reduced [2Fe-2S]-[ferredoxin] + 2 S-adenosyl-L-methionine = (sulfur carrier)-H + biotin + 2 5'-deoxyadenosine + 2 L-methionine + 2 oxidized [2Fe-2S]-[ferredoxin]. It participates in cofactor biosynthesis; biotin biosynthesis; biotin from 7,8-diaminononanoate: step 2/2. Functionally, catalyzes the conversion of dethiobiotin (DTB) to biotin by the insertion of a sulfur atom into dethiobiotin via a radical-based mechanism. In Nitratidesulfovibrio vulgaris (strain DSM 19637 / Miyazaki F) (Desulfovibrio vulgaris), this protein is Biotin synthase.